A 161-amino-acid polypeptide reads, in one-letter code: Allophycocyanin beta chain (161 aa).

An N4-methylasparagine modification is found at N71. Residue C81 participates in (2R,3E)-phycocyanobilin binding.

Belongs to the phycobiliprotein family. As to quaternary structure, heterodimer of an alpha and a beta chain. Post-translationally, contains one covalently linked phycocyanobilin chromophore.

The protein localises to the cellular thylakoid membrane. Functionally, light-harvesting photosynthetic bile pigment-protein from the phycobiliprotein complex. Allophycocyanin has a maximum absorption at approximately 650 nanometers. The polypeptide is Allophycocyanin beta chain (apcB) (Thermosynechococcus vestitus (strain NIES-2133 / IAM M-273 / BP-1)).